The sequence spans 128 residues: Transcription antitermination protein NusB (128 aa).

This sequence belongs to the NusB family.

Involved in transcription antitermination. Required for transcription of ribosomal RNA (rRNA) genes. Binds specifically to the boxA antiterminator sequence of the ribosomal RNA (rrn) operons. In Staphylococcus haemolyticus (strain JCSC1435), this protein is Transcription antitermination protein NusB.